The following is a 1127-amino-acid chain: Structural protein MDM1 (1127 aa).

Residues 85-273 (NAQIGKELES…WNLRIVSLSQ (189 aa)) form the PXA domain. Serine 670, serine 673, and serine 692 each carry phosphoserine. Residues 705 to 762 (SNNFRDNIASLTISIDQIEKELELLRHLILKADLTNNQMQLKILKKSQRTLLKELEMK) are a coiled coil. The PX domain maps to 782 to 905 (TKIYIRSYFS…RFLTDPTPFK (124 aa)).

The protein belongs to the sorting nexin family.

It localises to the cytoplasm. Its function is as follows. Essential for mitotic growth. Mediates organelle inheritance. This is Structural protein MDM1 (MDM1) from Saccharomyces cerevisiae (strain ATCC 204508 / S288c) (Baker's yeast).